The primary structure comprises 330 residues: Mycothiol acetyltransferase (330 aa).

2 consecutive N-acetyltransferase domains span residues 5 to 142 (LVTD…MPLR) and 171 to 328 (VRLR…APRP). Glu-36 serves as a coordination point for 1D-myo-inositol 2-(L-cysteinylamino)-2-deoxy-alpha-D-glucopyranoside. 80–82 (VVV) provides a ligand contact to acetyl-CoA. The interval 142–161 (RDIAGDEPGGPWEAPELPEP) is disordered. 1D-myo-inositol 2-(L-cysteinylamino)-2-deoxy-alpha-D-glucopyranoside contacts are provided by Glu-198, Lys-238, and Glu-254. Acetyl-CoA is bound by residues 258–260 (VGV) and 265–271 (QGSGLGR). 1D-myo-inositol 2-(L-cysteinylamino)-2-deoxy-alpha-D-glucopyranoside is bound at residue Tyr-292. 297–302 (NEAAVR) lines the acetyl-CoA pocket.

This sequence belongs to the acetyltransferase family. MshD subfamily. As to quaternary structure, monomer.

The catalysed reaction is 1D-myo-inositol 2-(L-cysteinylamino)-2-deoxy-alpha-D-glucopyranoside + acetyl-CoA = mycothiol + CoA + H(+). Catalyzes the transfer of acetyl from acetyl-CoA to desacetylmycothiol (Cys-GlcN-Ins) to form mycothiol. The sequence is that of Mycothiol acetyltransferase from Nocardiopsis dassonvillei (strain ATCC 23218 / DSM 43111 / CIP 107115 / JCM 7437 / KCTC 9190 / NBRC 14626 / NCTC 10488 / NRRL B-5397 / IMRU 509) (Actinomadura dassonvillei).